Reading from the N-terminus, the 181-residue chain is UPF0397 protein SUB0313 (181 aa).

5 consecutive transmembrane segments (helical) span residues 11–31 (AIGI…ITIF), 45–65 (LFSV…GHML), 69–89 (FAGY…GLGI), 114–134 (VQAL…DILI), and 147–167 (LFAA…LLIA).

The protein belongs to the UPF0397 family.

It is found in the cell membrane. In Streptococcus uberis (strain ATCC BAA-854 / 0140J), this protein is UPF0397 protein SUB0313.